Here is a 381-residue protein sequence, read N- to C-terminus: Gas vesicle protein C (381 aa).

7 consecutive repeat copies span residues glutamine 22–asparagine 59, aspartate 60–arginine 84, aspartate 85–histidine 122, glutamate 123–glutamine 160, glycine 161–alanine 192, aspartate 193–glutamate 232, and glutamate 233–isoleucine 274. A 7 X approximate tandem repeats region spans residues glutamine 22–isoleucine 274. The disordered stretch occupies residues alanine 261–threonine 333. The span at aspartate 276–glutamine 318 shows a compositional bias: acidic residues.

This sequence belongs to the halobacterial gas vesicle GvpC family. Detected as 2 slightly different sizes in vivo; the proteins appears larger in SDS-PAGE probably due to the acidic tail.

The protein resides in the gas vesicle. Its function is as follows. Confers stability, involved in shaping gas vesicles (GV), hollow, gas filled proteinaceous nanostructures found in some microorganisms. They allow positioning of halobacteria at the optimal depth for growth in the poorly aerated, shallow brine pools of their habitat. Expression of a 9.5 kb mc-vac DNA fragment containing 2 divergently transcribed regions (gvpD-gvpE-gvpF-gvpG-gvpH-gvpI-gvpJ-gvpK-gvpL-gvpM and gvpA-gvpC-gvpN-gvpO) allows H.volcanii to produce gas vesicles. The protein is Gas vesicle protein C of Haloferax mediterranei (strain ATCC 33500 / DSM 1411 / JCM 8866 / NBRC 14739 / NCIMB 2177 / R-4) (Halobacterium mediterranei).